The following is a 555-amino-acid chain: Energy-dependent translational throttle protein EttA (555 aa).

2 ABC transporter domains span residues 6-259 and 324-550; these read YTMH…AQEA and LEVS…RIKY. 39-46 serves as a coordination point for ATP; that stretch reads GLNGAGKS. The tract at residues 95 to 139 is arm; that stretch reads SEVVNALKRLDEVYALYADPDADFDKLAAEQGRLEEIIQAHDGHN. Residues 242 to 322 are ptIM; sequence GNYSSWLEQK…IPPGPRLGDK (81 aa). 356–363 provides a ligand contact to ATP; the sequence is GPNGAGKS.

This sequence belongs to the ABC transporter superfamily. ABCF family. Translational throttle EttA subfamily. Monomer. Probably contacts ribosomal proteins L1, L5, L33 and S7, the 16S and 23S rRNA and the P-site containing tRNA(fMet).

It localises to the cytoplasm. It catalyses the reaction ATP + H2O = ADP + phosphate + H(+). Its function is as follows. A translation factor that gates the progression of the 70S ribosomal initiation complex (IC, containing tRNA(fMet) in the P-site) into the translation elongation cycle by using a mechanism sensitive to the ATP/ADP ratio. Binds to the 70S ribosome E-site where it modulates the state of the translating ribosome during subunit translocation. ATP hydrolysis probably frees it from the ribosome, which can enter the elongation phase. The sequence is that of Energy-dependent translational throttle protein EttA from Escherichia coli O6:H1 (strain CFT073 / ATCC 700928 / UPEC).